Consider the following 311-residue polypeptide: DNA-directed RNA polymerase subunit alpha (311 aa).

An alpha N-terminal domain (alpha-NTD) region spans residues 1–227; the sequence is MNNISIKCLK…DLFTLLINNK (227 aa). Residues 242–311 form an alpha C-terminal domain (alpha-CTD) region; it reads ISIEPYTNIA…LKNKLGIILK (70 aa).

Belongs to the RNA polymerase alpha chain family. As to quaternary structure, in plastids the minimal PEP RNA polymerase catalytic core is composed of four subunits: alpha, beta, beta', and beta''. When a (nuclear-encoded) sigma factor is associated with the core the holoenzyme is formed, which can initiate transcription.

The protein resides in the plastid. It localises to the chloroplast. It carries out the reaction RNA(n) + a ribonucleoside 5'-triphosphate = RNA(n+1) + diphosphate. DNA-dependent RNA polymerase catalyzes the transcription of DNA into RNA using the four ribonucleoside triphosphates as substrates. The polypeptide is DNA-directed RNA polymerase subunit alpha (Phaeodactylum tricornutum (strain CCAP 1055/1)).